Reading from the N-terminus, the 1253-residue chain is Myosin-1 (1253 aa).

The disordered stretch occupies residues 1 to 40; it reads MGHSRRPVGGEKKSRGFGRSKAAADVGDGRQAGKPQVKKA. The Myosin motor domain occupies 50–729; sequence IGVSDLTLLS…TLFALEAMRD (680 aa). 143–150 contributes to the ATP binding site; sequence GESGAGKT. Residue Ser-371 is modified to Phosphoserine. An actin-binding region spans residues 418-500; it reads SIGILDIYGF…PGVFAALNDA (83 aa). 2 IQ domains span residues 733–753 and 754–779; these read HNMA…RIEC and ATRI…QGHQ. The 191-residue stretch at 787-977 folds into the TH1 domain; the sequence is RRRMSLLGSR…TIHTGAGEPA (191 aa). 2 disordered regions span residues 959-1083 and 1139-1253; these read TGDD…PKKP and QVAP…DDDW. The segment covering 1029 to 1055 has biased composition (low complexity); it reads PQPAAAQPAAPQPAARVVPQPVAAVAA. Composition is skewed to pro residues over residues 1068–1081 and 1143–1155; these read APPP…PAPK and APKP…PPAA. One can recognise an SH3 domain in the interval 1080–1141; it reads PKKPTAKALY…PEAYLEEQVA (62 aa). Low complexity-rich tracts occupy residues 1156–1173 and 1221–1235; these read PRST…AKAK and NSAS…LAEA.

This sequence belongs to the TRAFAC class myosin-kinesin ATPase superfamily. Myosin family. Phosphorylation of the TEDS site (Ser-371) is required for the polarization of the actin cytoskeleton. Phosphorylation probably activates the myosin-I ATPase activity.

It localises to the cytoplasm. The protein localises to the cytoskeleton. Its subcellular location is the actin patch. Functionally, type-I myosin implicated in the organization of the actin cytoskeleton. Required for proper actin cytoskeleton polarization. At the cell cortex, assembles in patch-like structures together with proteins from the actin-polymerizing machinery and promotes actin assembly. Functions as actin nucleation-promoting factor (NPF) for the Arp2/3 complex. Plays an important role in polarized growth, spore germination, hyphal morphogenesis, and septal wall formation. The polypeptide is Myosin-1 (myoA) (Aspergillus clavatus (strain ATCC 1007 / CBS 513.65 / DSM 816 / NCTC 3887 / NRRL 1 / QM 1276 / 107)).